A 123-amino-acid chain; its full sequence is Large ribosomal subunit protein uL29 (123 aa).

The protein belongs to the universal ribosomal protein uL29 family.

This is Large ribosomal subunit protein uL29 (RPL35) from Theileria lestoquardi.